The primary structure comprises 304 residues: uncharacterized protein (304 aa).

This is an uncharacterized protein from Ureaplasma parvum serovar 3 (strain ATCC 700970).